We begin with the raw amino-acid sequence, 729 residues long: MKKKNLITAALPYVNNIPHLGNLVQVLSADAFARYSRMMGIETLYVCGTDEYGTATETKALIEKTTPEELCNKYYEIHKSIYEWFNIKFDIFGRTTNKRHKETVQDLFLKLEKNGYTTEKESEQFFCKQDQMFLADRYVTGECPNCGNNAKGDQCENCSKLLSPTDLINPKCIICKNIPIIKTTKHIYIDLPKIKDELSHWMQITELNTNWNTNAIKITNAFLRDGLKERAITRDLKWGIPVPKKEYENKVFYVWFDAPIGYISITKEISKDWESWWKNNEETNLVQFIGKDNILFHTVIFPSIALGSKENWTMLSKLASSEYLNYENLKFSKSAGTGIFGNDVITTGIPSDIWRFYIYYNRPEKSDFQFMWDDFMERVNSELIGNFSNLVNRVLTFYKKFFGDQIDKIEIKEDFWQEINLKYDKTLNFFKQVELKSALKEILDISRTGNKIFQDKEPWKTKDSTPQKTKELLLNLIYLIRDLSILISPFIPHTSDKIRRFFGNSYEISNRFLGTNLGLSTIQFTEVLFIKLEKHLINSLKLKYSGSKNMQDEQTSNQINPINLFSEQVCLKVVQVKTIERNPDAEKLFILKLNDGSSDGKQIVSSLADYYKEEELIGKHIIIVDNLKPAKFRGIKSEGMLIATEDKDKNFKVIIVEDFKDNPIPGERIILESDSYKELKSPAKISIDKFFKTQIVAENGELKINGINLILEHSKEKILSIEIPNGKVY.

The 'HIGH' region signature appears at 12 to 22; that stretch reads PYVNNIPHLGN. Positions 143, 146, 155, and 158 each coordinate Zn(2+). The 'KMSKS' region motif lies at 330–334; it reads KFSKS. Lysine 333 serves as a coordination point for ATP. A tRNA-binding domain is found at 565–670; the sequence is FSEQVCLKVV…DNPIPGERII (106 aa).

Belongs to the class-I aminoacyl-tRNA synthetase family. MetG type 1 subfamily. In terms of assembly, homodimer. The cofactor is Zn(2+).

It localises to the cytoplasm. It catalyses the reaction tRNA(Met) + L-methionine + ATP = L-methionyl-tRNA(Met) + AMP + diphosphate. In terms of biological role, is required not only for elongation of protein synthesis but also for the initiation of all mRNA translation through initiator tRNA(fMet) aminoacylation. The polypeptide is Methionine--tRNA ligase (Borrelia hermsii (strain HS1 / DAH)).